A 299-amino-acid polypeptide reads, in one-letter code: Ribonuclease H2 subunit A (299 aa).

Position 1 is an N-acetylmethionine (methionine 1). One can recognise an RNase H type-2 domain in the interval 28-251; the sequence is PCVLGVDEAG…AQSILESEAE (224 aa). Positions 34, 35, and 142 each coordinate a divalent metal cation. Residues threonine 205 and threonine 217 each carry the phosphothreonine modification. The interval 250 to 272 is disordered; sequence AEDVKWEDSETGDPKGPGKIKSY. Phosphoserine is present on serine 258.

This sequence belongs to the RNase HII family. Eukaryotic subfamily. In terms of assembly, the RNase H2 complex is a heterotrimer composed of the catalytic subunit RNASEH2A and the non-catalytic subunits RNASEH2B and RNASEH2C. Requires Mn(2+) as cofactor. Mg(2+) is required as a cofactor.

The protein localises to the nucleus. The enzyme catalyses Endonucleolytic cleavage to 5'-phosphomonoester.. Functionally, catalytic subunit of RNase HII, an endonuclease that specifically degrades the RNA of RNA:DNA hybrids. Participates in DNA replication, possibly by mediating the removal of lagging-strand Okazaki fragment RNA primers during DNA replication. Mediates the excision of single ribonucleotides from DNA:RNA duplexes. The protein is Ribonuclease H2 subunit A (RNASEH2A) of Bos taurus (Bovine).